A 133-amino-acid polypeptide reads, in one-letter code: Type VI secretion amidase effector 2 protein (133 aa).

Catalysis depends on residues Cys-23 and His-73.

This sequence belongs to the cell wall amidase Dae2/Tae2-like family.

The protein localises to the host periplasm. It is found in the secreted. It functions in the pathway cell wall degradation; peptidoglycan degradation. Functionally, toxic component of a contact-dependent interbacterial competition system (also called effector-immunity systems). Secreted by the SPI-6 type VI secretion system, probably into the periplasm of bacterial target cells. A cell wall amidase with specificity toward the D-meso-DAP-D-alanine bond (D-meso-diaminopimelic-D-alanine) found in peptidoglycan of Gram-negative bacteria. Toxicity is counteracted by a cognate immunity protein Tai2 (t2585), but not immunity proteins associated with a similar endopeptidase in other bacteria. In vitro degrades peptidoglycans from Gram-negative but not Gram-positive bacteria. The chain is Type VI secretion amidase effector 2 protein from Salmonella typhi.